A 147-amino-acid polypeptide reads, in one-letter code: uncharacterized protein (147 aa).

In terms of domain architecture, Rhodanese spans 50–140; the sequence is NQKKAIIVDT…WNSENLPTTF (91 aa).

This is an uncharacterized protein from Buchnera aphidicola subsp. Schizaphis graminum (strain Sg).